The primary structure comprises 400 residues: 2-octaprenylphenol hydroxylase (400 aa).

Residues 49–52 and 297–303 contribute to the FAD site; these read RVSA and LAGQGVN.

This sequence belongs to the UbiH/COQ6 family. As to quaternary structure, homotetramer. Component of the Ubi complex metabolon, which regroups five ubiquinone biosynthesis proteins (UbiE, UbiF, UbiG, UbiH and UbiI) and two accessory factors (UbiK and the lipid-binding protein UbiJ). FAD is required as a cofactor.

It localises to the cytoplasm. It carries out the reaction 2-all-trans-octaprenylphenol + NADPH + O2 + H(+) = 3-(all-trans-octaprenyl)benzene-1,2-diol + NADP(+) + H2O. The catalysed reaction is a 2-(all-trans-polyprenyl)phenol + NADPH + O2 + H(+) = a 3-(all-trans-polyprenyl)benzene-1,2-diol + NADP(+) + H2O. The protein operates within cofactor biosynthesis; ubiquinone biosynthesis. Functionally, FAD-dependent monooxygenase required for the aerobic hydroxylation of 2-octaprenylphenol to 2-octaprenyl-6-hydroxy-phenol, the first hydroxylation step in coenzyme Q (ubiquinone) biosynthesis. The protein is 2-octaprenylphenol hydroxylase of Escherichia coli (strain K12).